The chain runs to 386 residues: Outer membrane protein assembly factor BamB (386 aa).

The first 25 residues, 1–25 (MMRNSRPGRAWRGAVVLTGLLALSG), serve as a signal peptide directing secretion. Residue C26 is the site of N-palmitoyl cysteine attachment. A lipid anchor (S-diacylglycerol cysteine) is attached at C26.

The protein belongs to the BamB family. As to quaternary structure, part of the Bam complex.

It localises to the cell outer membrane. Functionally, part of the outer membrane protein assembly complex, which is involved in assembly and insertion of beta-barrel proteins into the outer membrane. The polypeptide is Outer membrane protein assembly factor BamB (Bordetella pertussis (strain Tohama I / ATCC BAA-589 / NCTC 13251)).